Consider the following 870-residue polypeptide: DNA mismatch repair protein MutS (870 aa).

622–629 (GPNMGGKS) contributes to the ATP binding site.

The protein belongs to the DNA mismatch repair MutS family.

Its function is as follows. This protein is involved in the repair of mismatches in DNA. It is possible that it carries out the mismatch recognition step. This protein has a weak ATPase activity. This chain is DNA mismatch repair protein MutS, found in Methylibium petroleiphilum (strain ATCC BAA-1232 / LMG 22953 / PM1).